The chain runs to 199 residues: Holliday junction branch migration complex subunit RuvA (199 aa).

The segment at Met-1–Leu-65 is domain I. Positions Asp-66 to Phe-144 are domain II. The interval Phe-144–Ala-148 is flexible linker. The interval Gly-149–Arg-199 is domain III.

This sequence belongs to the RuvA family. As to quaternary structure, homotetramer. Forms an RuvA(8)-RuvB(12)-Holliday junction (HJ) complex. HJ DNA is sandwiched between 2 RuvA tetramers; dsDNA enters through RuvA and exits via RuvB. An RuvB hexamer assembles on each DNA strand where it exits the tetramer. Each RuvB hexamer is contacted by two RuvA subunits (via domain III) on 2 adjacent RuvB subunits; this complex drives branch migration. In the full resolvosome a probable DNA-RuvA(4)-RuvB(12)-RuvC(2) complex forms which resolves the HJ.

The protein localises to the cytoplasm. Its function is as follows. The RuvA-RuvB-RuvC complex processes Holliday junction (HJ) DNA during genetic recombination and DNA repair, while the RuvA-RuvB complex plays an important role in the rescue of blocked DNA replication forks via replication fork reversal (RFR). RuvA specifically binds to HJ cruciform DNA, conferring on it an open structure. The RuvB hexamer acts as an ATP-dependent pump, pulling dsDNA into and through the RuvAB complex. HJ branch migration allows RuvC to scan DNA until it finds its consensus sequence, where it cleaves and resolves the cruciform DNA. This is Holliday junction branch migration complex subunit RuvA from Legionella pneumophila (strain Paris).